The primary structure comprises 366 residues: tRNA/tmRNA (uracil-C(5))-methyltransferase (366 aa).

S-adenosyl-L-methionine is bound by residues Q190, Y218, N223, E239, and D299. The Nucleophile role is filled by C324. The active-site Proton acceptor is E358.

It belongs to the class I-like SAM-binding methyltransferase superfamily. RNA M5U methyltransferase family. TrmA subfamily.

It catalyses the reaction uridine(54) in tRNA + S-adenosyl-L-methionine = 5-methyluridine(54) in tRNA + S-adenosyl-L-homocysteine + H(+). It carries out the reaction uridine(341) in tmRNA + S-adenosyl-L-methionine = 5-methyluridine(341) in tmRNA + S-adenosyl-L-homocysteine + H(+). Dual-specificity methyltransferase that catalyzes the formation of 5-methyluridine at position 54 (m5U54) in all tRNAs, and that of position 341 (m5U341) in tmRNA (transfer-mRNA). This is tRNA/tmRNA (uracil-C(5))-methyltransferase from Escherichia coli O157:H7 (strain EC4115 / EHEC).